The primary structure comprises 247 residues: tRNA pseudouridine synthase A (247 aa).

Aspartate 52 (nucleophile) is an active-site residue. Tyrosine 113 contacts substrate.

This sequence belongs to the tRNA pseudouridine synthase TruA family. In terms of assembly, homodimer.

The enzyme catalyses uridine(38/39/40) in tRNA = pseudouridine(38/39/40) in tRNA. Its function is as follows. Formation of pseudouridine at positions 38, 39 and 40 in the anticodon stem and loop of transfer RNAs. The sequence is that of tRNA pseudouridine synthase A from Bartonella bacilliformis (strain ATCC 35685 / KC583 / Herrer 020/F12,63).